We begin with the raw amino-acid sequence, 608 residues long: Protein FAM151A (608 aa).

Residues 14–34 (WILAGSVSMTLVLAISMILGL) traverse the membrane as a helical segment. Residues 588–608 (RHRPSSRTGPSYVEGFPGESR) are disordered.

The protein belongs to the menorin family.

It localises to the membrane. The polypeptide is Protein FAM151A (Fam151a) (Rattus norvegicus (Rat)).